The sequence spans 108 residues: Flagellar hook-basal body complex protein FliE (108 aa).

It belongs to the FliE family.

It localises to the bacterial flagellum basal body. This Pseudomonas fluorescens (strain ATCC BAA-477 / NRRL B-23932 / Pf-5) protein is Flagellar hook-basal body complex protein FliE.